The following is a 419-amino-acid chain: tRNA(Met) cytidine acetate ligase (419 aa).

Residues 7 to 20 (ITEY…HLHH), glycine 101, asparagine 163, and arginine 188 contribute to the ATP site.

Belongs to the TmcAL family.

The protein localises to the cytoplasm. The catalysed reaction is cytidine(34) in elongator tRNA(Met) + acetate + ATP = N(4)-acetylcytidine(34) in elongator tRNA(Met) + AMP + diphosphate. Functionally, catalyzes the formation of N(4)-acetylcytidine (ac(4)C) at the wobble position of elongator tRNA(Met), using acetate and ATP as substrates. First activates an acetate ion to form acetyladenylate (Ac-AMP) and then transfers the acetyl group to tRNA to form ac(4)C34. The chain is tRNA(Met) cytidine acetate ligase from Syntrophotalea carbinolica (strain DSM 2380 / NBRC 103641 / GraBd1) (Pelobacter carbinolicus).